The following is a 317-amino-acid chain: Porphobilinogen deaminase (317 aa).

C245 is modified (S-(dipyrrolylmethanemethyl)cysteine).

This sequence belongs to the HMBS family. As to quaternary structure, monomer. Dipyrromethane serves as cofactor.

The catalysed reaction is 4 porphobilinogen + H2O = hydroxymethylbilane + 4 NH4(+). It participates in porphyrin-containing compound metabolism; protoporphyrin-IX biosynthesis; coproporphyrinogen-III from 5-aminolevulinate: step 2/4. The protein operates within porphyrin-containing compound metabolism; chlorophyll biosynthesis. Tetrapolymerization of the monopyrrole PBG into the hydroxymethylbilane pre-uroporphyrinogen in several discrete steps. The chain is Porphobilinogen deaminase from Parasynechococcus marenigrum (strain WH8102).